The primary structure comprises 139 residues: MIIGIGSDLIDITRVGKVIERHGERFLDRIFTAAERAKAERRAKNEKMVVATYAKRFAAKEACSKALGTGIRRGVWWRDMGVVNLPGGRPTMQLTGGALARLQALTPDGFEARIDVSITDDWPLAQAFVIISAVPLAKS.

Residues Asp-8 and Glu-61 each coordinate Mg(2+).

It belongs to the P-Pant transferase superfamily. AcpS family. Mg(2+) is required as a cofactor.

It is found in the cytoplasm. The enzyme catalyses apo-[ACP] + CoA = holo-[ACP] + adenosine 3',5'-bisphosphate + H(+). Its function is as follows. Transfers the 4'-phosphopantetheine moiety from coenzyme A to a Ser of acyl-carrier-protein. The protein is Holo-[acyl-carrier-protein] synthase of Bradyrhizobium diazoefficiens (strain JCM 10833 / BCRC 13528 / IAM 13628 / NBRC 14792 / USDA 110).